Reading from the N-terminus, the 204-residue chain is N-(5'-phosphoribosyl)anthranilate isomerase (204 aa).

The protein belongs to the TrpF family.

The catalysed reaction is N-(5-phospho-beta-D-ribosyl)anthranilate = 1-(2-carboxyphenylamino)-1-deoxy-D-ribulose 5-phosphate. It participates in amino-acid biosynthesis; L-tryptophan biosynthesis; L-tryptophan from chorismate: step 3/5. The polypeptide is N-(5'-phosphoribosyl)anthranilate isomerase (Bacillus cereus (strain AH187)).